Consider the following 362-residue polypeptide: Outer membrane porin F (362 aa).

The first 22 residues, 1 to 22 (MMKRNILAVIVPALLVAGTANA), serve as a signal peptide directing secretion.

Belongs to the Gram-negative porin family. Homotrimer. Forms mixed heterotrimers with OmpC; other mixed heterotrimers are also probable.

Its subcellular location is the cell outer membrane. Its function is as follows. Forms pores that allow passive diffusion of small molecules across the outer membrane. Functionally, (Microbial infection) Is the major receptor for colicin E5. In terms of biological role, (Microbial infection) A mixed OmpC-OmpF heterotrimer is the outer membrane receptor for toxin CdiA-EC536. This Escherichia coli O6:K15:H31 (strain 536 / UPEC) protein is Outer membrane porin F (ompF).